The sequence spans 616 residues: Electron transfer flavoprotein-ubiquinone oxidoreductase, mitochondrial (616 aa).

The transit peptide at Met-1–Cys-32 directs the protein to the mitochondrion. Val-70 to Ile-84 provides a ligand contact to FAD. Lys-95 carries the post-translational modification N6-acetyllysine. Residues Ile-108–Asp-129 lie within the membrane without spanning it. 2 positions are modified to N6-acetyllysine: Lys-131 and Lys-222. A ubiquinone is bound by residues Gly-304 and Gly-305. N6-acetyllysine is present on residues Lys-356 and Lys-415. Residues Ala-427–Glu-446 lie within the membrane without spanning it. At Ser-550 the chain carries Phosphoserine. Residues Cys-560, Cys-585, Cys-588, and Cys-591 each contribute to the [4Fe-4S] cluster site. One can recognise a 4Fe-4S ferredoxin-type domain in the interval Phe-576–Pro-605.

Belongs to the ETF-QO/FixC family. As to quaternary structure, monomer. It depends on [4Fe-4S] cluster as a cofactor. The cofactor is FAD.

It is found in the mitochondrion inner membrane. The catalysed reaction is a ubiquinone + reduced [electron-transfer flavoprotein] = a ubiquinol + oxidized [electron-transfer flavoprotein] + H(+). Functionally, accepts electrons from ETF and reduces ubiquinone. This chain is Electron transfer flavoprotein-ubiquinone oxidoreductase, mitochondrial (Etfdh), found in Rattus norvegicus (Rat).